A 1069-amino-acid chain; its full sequence is Enteropeptidase (1069 aa).

Residues 1-18 (MKSSRDEAVGHHSISSFE) are Cytoplasmic-facing. A helical; Signal-anchor for type II membrane protein membrane pass occupies residues 19–47 (VMLSALFIMLMVFSIGLIAVSWLAVKESE). The Extracellular portion of the chain corresponds to 48–1069 (GDAALGKSHE…FIEWIHSFLH (1022 aa)). Residues 54–169 (KSHEVRGTFK…NSIDITASLS (116 aa)) enclose the SEA domain. N-linked (GlcNAc...) asparagine glycosylation is found at Asn147, Asn197, and Asn212. The region spanning 227-268 (IECQPGSRPCAHAWNCVATDLFCDGEVNCPDGSDEDTGLCAT) is the LDL-receptor class A 1 domain. Intrachain disulfides connect Cys229–Cys242, Cys236–Cys255, Cys249–Cys266, and Cys270–Cys298. The 110-residue stretch at 270–379 (CDGRFLLTGD…IGFNATYSTF (110 aa)) folds into the CUB 1 domain. Residues Asn373, Asn380, Asn433, Asn515, Asn579, and Asn675 are each glycosylated (N-linked (GlcNAc...) asparagine). The region spanning 387-549 (YEKIDCTFDD…ISLTNGICSQ (163 aa)) is the MAM domain. A disulfide bond links Cys569 and Cys597. In terms of domain architecture, CUB 2 spans 569 to 679 (CGGPFELWEP…KGFKANFTSG (111 aa)). An LDL-receptor class A 2 domain is found at 686-724 (EPCQDDEFQCKDGNCIPLGNLCDSYPHCRDGSDEASCVR). Cystine bridges form between Cys688/Cys700, Cys695/Cys713, and Cys707/Cys722. Positions 723 to 816 (VRFLNGTRSN…LILLQCNHKS (94 aa)) constitute an SRCR domain. 4 N-linked (GlcNAc...) asparagine glycosylation sites follow: Asn727, Asn751, Asn770, and Asn791. Cystine bridges form between Cys802–Cys812, Cys817–Cys945, Cys859–Cys875, Cys959–Cys1027, Cys991–Cys1006, and Cys1017–Cys1045. The Peptidase S1 domain occupies 830–1069 (IVGGSDAQAG…FIEWIHSFLH (240 aa)). His874 serves as the catalytic Charge relay system. Asn897 carries N-linked (GlcNAc...) asparagine glycosylation. The active-site Charge relay system is the Asp925. Residues Asn936 and Asn999 are each glycosylated (N-linked (GlcNAc...) asparagine). Ser1021 acts as the Charge relay system in catalysis.

This sequence belongs to the peptidase S1 family. In terms of assembly, heterodimer of a catalytic (light) chain and a multidomain (heavy) chain linked by a disulfide bond. In terms of processing, the chains are derived from a single precursor that is cleaved by a trypsin-like protease.

It is found in the membrane. The enzyme catalyses Activation of trypsinogen by selective cleavage of 6-Lys-|-Ile-7 bond.. In terms of biological role, responsible for initiating activation of pancreatic proteolytic proenzymes (trypsin, chymotrypsin and carboxypeptidase A). It catalyzes the conversion of trypsinogen to trypsin which in turn activates other proenzymes including chymotrypsinogen, procarboxypeptidases, and proelastases. This is Enteropeptidase (Tmprss15) from Mus musculus (Mouse).